The primary structure comprises 546 residues: Chaperonin GroEL 2 (546 aa).

ATP is bound by residues 30-33 (TLGP), Lys-51, 87-91 (DGTTT), Gly-415, and Asp-495. The segment at 527–546 (DAAPATAPGGPGAGGPGFDF) is disordered. Positions 535–546 (GGPGAGGPGFDF) are enriched in gly residues.

Belongs to the chaperonin (HSP60) family. Forms a cylinder of 14 subunits composed of two heptameric rings stacked back-to-back. Interacts with the co-chaperonin GroES.

The protein localises to the cytoplasm. It catalyses the reaction ATP + H2O + a folded polypeptide = ADP + phosphate + an unfolded polypeptide.. Functionally, together with its co-chaperonin GroES, plays an essential role in assisting protein folding. The GroEL-GroES system forms a nano-cage that allows encapsulation of the non-native substrate proteins and provides a physical environment optimized to promote and accelerate protein folding. This chain is Chaperonin GroEL 2, found in Burkholderia ambifaria (strain ATCC BAA-244 / DSM 16087 / CCUG 44356 / LMG 19182 / AMMD) (Burkholderia cepacia (strain AMMD)).